An 83-amino-acid chain; its full sequence is Sulfur carrier protein TusA (83 aa).

The active-site Cysteine persulfide intermediate is the cysteine 19.

Belongs to the sulfur carrier protein TusA family.

It is found in the cytoplasm. Functionally, sulfur carrier protein which probably makes part of a sulfur-relay system. This chain is Sulfur carrier protein TusA, found in Aliivibrio salmonicida (strain LFI1238) (Vibrio salmonicida (strain LFI1238)).